The sequence spans 354 residues: MRVTDFSFELPESLIAHYPQPERSRCRLLSLEGPTGALTHGTFTDLLDKLNPGDLLVFNNTRVIPARLFGRKASGGKIEVLVERMLDDKRILAHIRASKAPKPGTELLLGDDESIHATMTARHGALFEVEFNDPRPVLDILNAIGHMPLPPYIDRPDEDADRELYQTVYSEKPGAVAAPTAGLHFDEPLLAALREKGVEMAFVTLHVGAGTFQPVRVDTIEDHIMHSEYAEVPQEVVDAVLVAKVRGNRVIAVGTTSVRSLESAAQAAKSDLIEPFFGDTQIFIYPGYQYKVIDALITNFHLPESTLIMLVSAFAGYQHTMNAYKTAVEQKYRFFSYGDAMFITYNPQAIFERP.

This sequence belongs to the QueA family. Monomer.

The protein resides in the cytoplasm. The catalysed reaction is 7-aminomethyl-7-carbaguanosine(34) in tRNA + S-adenosyl-L-methionine = epoxyqueuosine(34) in tRNA + adenine + L-methionine + 2 H(+). The protein operates within tRNA modification; tRNA-queuosine biosynthesis. Its function is as follows. Transfers and isomerizes the ribose moiety from AdoMet to the 7-aminomethyl group of 7-deazaguanine (preQ1-tRNA) to give epoxyqueuosine (oQ-tRNA). This chain is S-adenosylmethionine:tRNA ribosyltransferase-isomerase, found in Salmonella newport (strain SL254).